The following is a 456-amino-acid chain: tRNA-2-methylthio-N(6)-dimethylallyladenosine synthase (456 aa).

An MTTase N-terminal domain is found at 18–136; it reads EFFFIQTFGC…FPEYLHRVQV (119 aa). [4Fe-4S] cluster-binding residues include Cys-27, Cys-63, Cys-97, Cys-173, Cys-177, and Cys-180. The region spanning 159–391 is the Radical SAM core domain; that stretch reads RKSNVKAFVT…AVNEGIVVGN (233 aa). A TRAM domain is found at 392–455; that stretch reads KAAEGKIYEV…SFSLVGEVVE (64 aa).

This sequence belongs to the methylthiotransferase family. MiaB subfamily. Monomer. [4Fe-4S] cluster is required as a cofactor.

It is found in the cytoplasm. It carries out the reaction N(6)-dimethylallyladenosine(37) in tRNA + (sulfur carrier)-SH + AH2 + 2 S-adenosyl-L-methionine = 2-methylsulfanyl-N(6)-dimethylallyladenosine(37) in tRNA + (sulfur carrier)-H + 5'-deoxyadenosine + L-methionine + A + S-adenosyl-L-homocysteine + 2 H(+). Its function is as follows. Catalyzes the methylthiolation of N6-(dimethylallyl)adenosine (i(6)A), leading to the formation of 2-methylthio-N6-(dimethylallyl)adenosine (ms(2)i(6)A) at position 37 in tRNAs that read codons beginning with uridine. The chain is tRNA-2-methylthio-N(6)-dimethylallyladenosine synthase from Clostridium botulinum (strain Alaska E43 / Type E3).